Reading from the N-terminus, the 331-residue chain is Pectinesterase (331 aa).

Residues 1-17 form the signal peptide; it reads MVKSVLASALFAVSALA. A substrate-binding site is contributed by glutamine 139. The active-site Proton donor is the aspartate 162. Aspartate 183 acts as the Nucleophile in catalysis. 2 residues coordinate substrate: arginine 248 and tryptophan 250.

Belongs to the pectinesterase family.

It is found in the secreted. The catalysed reaction is [(1-&gt;4)-alpha-D-galacturonosyl methyl ester](n) + n H2O = [(1-&gt;4)-alpha-D-galacturonosyl](n) + n methanol + n H(+). It participates in glycan metabolism; pectin degradation; 2-dehydro-3-deoxy-D-gluconate from pectin: step 1/5. Functionally, involved in maceration and soft-rotting of plant tissue. The polypeptide is Pectinesterase (pme1) (Aspergillus aculeatus).